The chain runs to 200 residues: Probable nicotinate-nucleotide adenylyltransferase (200 aa).

It belongs to the NadD family.

The enzyme catalyses nicotinate beta-D-ribonucleotide + ATP + H(+) = deamido-NAD(+) + diphosphate. Its pathway is cofactor biosynthesis; NAD(+) biosynthesis; deamido-NAD(+) from nicotinate D-ribonucleotide: step 1/1. Its function is as follows. Catalyzes the reversible adenylation of nicotinate mononucleotide (NaMN) to nicotinic acid adenine dinucleotide (NaAD). In Clostridium botulinum (strain Eklund 17B / Type B), this protein is Probable nicotinate-nucleotide adenylyltransferase.